The primary structure comprises 431 residues: Glutamate-1-semialdehyde 2,1-aminomutase (431 aa).

Lys-265 is modified (N6-(pyridoxal phosphate)lysine).

It belongs to the class-III pyridoxal-phosphate-dependent aminotransferase family. HemL subfamily. As to quaternary structure, homodimer. The cofactor is pyridoxal 5'-phosphate.

The protein resides in the cytoplasm. The catalysed reaction is (S)-4-amino-5-oxopentanoate = 5-aminolevulinate. It participates in porphyrin-containing compound metabolism; protoporphyrin-IX biosynthesis; 5-aminolevulinate from L-glutamyl-tRNA(Glu): step 2/2. The protein is Glutamate-1-semialdehyde 2,1-aminomutase of Aliivibrio fischeri (strain MJ11) (Vibrio fischeri).